Reading from the N-terminus, the 428-residue chain is Spliceosome RNA helicase DDX39B (428 aa).

Over residues 1–19 the composition is skewed to acidic residues; that stretch reads MAENDVDNELLDYEDDEVE. The segment at 1 to 31 is disordered; that stretch reads MAENDVDNELLDYEDDEVETAAGGDGAEAPA. Alanine 2 is modified (N-acetylalanine). At lysine 36 the chain carries N6-acetyllysine; alternate. Lysine 36 participates in a covalent cross-link: Glycyl lysine isopeptide (Lys-Gly) (interchain with G-Cter in SUMO2); alternate. Serine 38 and serine 41 each carry phosphoserine. The short motif at 45–73 is the Q motif element; the sequence is SGFRDFLLKPELLRAIVDCGFEHPSEVQH. One can recognise a Helicase ATP-binding domain in the interval 76 to 249; that stretch reads IPQAILGMDV…RKFMQDPMEI (174 aa). Residue 89-96 coordinates ATP; it reads AKSGMGKT. A Phosphothreonine modification is found at threonine 172. The DECD box signature appears at 196–199; that stretch reads DECD. The region spanning 261-422 is the Helicase C-terminal domain; it reads GLQQYYVKLK…ELPDEIDISS (162 aa).

This sequence belongs to the DEAD box helicase family. DECD subfamily. Homodimer, and heterodimer with DDX39A. DDX39B interacts with the THO subcomplex to form the THO-DDX39B complex which multimerizes into a 28-subunit tetrameric assembly. Component of the transcription/export (TREX) complex at least composed of ALYREF/THOC4, DDX39B, SARNP/CIP29, CHTOP and the THO subcomplex; in the complex interacts with THOC2. THOC1-THOC2-THOC3-DDX39B subcomplex is sufficient for the interaction with export factor NXF1-NXT1. TREX seems to have a dynamic structure involving ATP-dependent remodeling. Within the TREX complex bridges ALYREF/THOC4 and the THO subcomplex, and, in a ATP-dependent manner, ALYREF/THOC4 and SARNP/CIP29. Component of the spliceosome. Interacts directly with U2AF2. Interacts with RBM8A, RNPS1 and SRRM1, FYTTD1/UIF, THOC1, MX1 and POLDIP3. Interacts with LUZP4. Interacts with SARNP/CIP29 (via the C-terminal domain); the interaction is direct and facilitates RNA binding of DDX39B.

It localises to the nucleus. It is found in the nucleus speckle. The protein localises to the cytoplasm. It catalyses the reaction ATP + H2O = ADP + phosphate + H(+). In terms of biological role, involved in nuclear export of spliced and unspliced mRNA. Component of the TREX complex which is thought to couple mRNA transcription, processing and nuclear export, and specifically associates with spliced mRNA and not with unspliced pre-mRNA. The TREX complex is recruited to spliced mRNAs by a transcription-independent mechanism, binds to mRNA upstream of the exon-junction complex (EJC) and is recruited in a splicing- and cap-dependent manner to a region near the 5' end of the mRNA where it functions in mRNA export to the cytoplasm via the TAP/NXF1 pathway. The THOC1-THOC2-THOC3 core complex alone is sufficient to promote ATPase activity of DDX39B; in the complex THOC2 is the only component that directly interacts with DDX39B. Associates with SARNP/CIP29, which facilitates RNA binding of DDX39B and likely plays a role in mRNA export. May undergo several rounds of ATP hydrolysis during assembly of TREX to drive subsequent loading of components such as ALYREF/THOC4 and CHTOP onto mRNA. Also associates with pre-mRNA independent of ALYREF/THOC4. Involved in the nuclear export of intronless mRNA; the ATP-bound form is proposed to recruit export adapter ALYREF/THOC4 to intronless mRNA; its ATPase activity is cooperatively stimulated by RNA and ALYREF/THOC4 and ATP hydrolysis is thought to trigger the dissociation from RNA to allow the association of ALYREF/THOC4 and the NXF1-NXT1 heterodimer. Involved in transcription elongation and genome stability. Its function is as follows. Splice factor that is required for the first ATP-dependent step in spliceosome assembly and for the interaction of U2 snRNP with the branchpoint. Has both RNA-stimulated ATP binding/hydrolysis activity and ATP-dependent RNA unwinding activity. Even with the stimulation of RNA, the ATPase activity is weak. Can only hydrolyze ATP but not other NTPs. The RNA stimulation of ATPase activity does not have a strong preference for the sequence and length of the RNA. However, ssRNA stimulates the ATPase activity much more strongly than dsRNA. Can unwind 5' or 3' overhangs or blunt end RNA duplexes in vitro. The ATPase and helicase activities are not influenced by U2AF2; the effect of ALYREF/THOC4 is reported conflictingly. This Bos taurus (Bovine) protein is Spliceosome RNA helicase DDX39B (DDX39B).